The following is a 193-amino-acid chain: Alpha-S2-casein (193 aa).

Residues 1-15 (MKFFIFTCLLAVVLA) form the signal peptide. S23, S24, S25, S28, S47, S68, S123, S125, S128, and S136 each carry phosphoserine.

The protein belongs to the alpha-casein family. As to expression, mammary gland specific. Secreted in milk.

The protein resides in the secreted. Its function is as follows. Important role in the capacity of milk to transport calcium phosphate. This chain is Alpha-S2-casein (CSN1S2), found in Camelus dromedarius (Dromedary).